A 266-amino-acid chain; its full sequence is Glucosamine-6-phosphate deaminase (266 aa).

Catalysis depends on Asp72, which acts as the Proton acceptor; for enolization step. Asp141 (for ring-opening step) is an active-site residue. The active-site Proton acceptor; for ring-opening step is His143. The active-site For ring-opening step is the Glu148.

This sequence belongs to the glucosamine/galactosamine-6-phosphate isomerase family. NagB subfamily. In terms of assembly, homohexamer.

It carries out the reaction alpha-D-glucosamine 6-phosphate + H2O = beta-D-fructose 6-phosphate + NH4(+). It participates in amino-sugar metabolism; N-acetylneuraminate degradation; D-fructose 6-phosphate from N-acetylneuraminate: step 5/5. Allosterically activated by N-acetylglucosamine 6-phosphate (GlcNAc6P). Catalyzes the reversible isomerization-deamination of glucosamine 6-phosphate (GlcN6P) to form fructose 6-phosphate (Fru6P) and ammonium ion. In Aliivibrio fischeri (strain ATCC 700601 / ES114) (Vibrio fischeri), this protein is Glucosamine-6-phosphate deaminase.